The primary structure comprises 507 residues: ATP synthase subunit alpha, chloroplastic (507 aa).

170-177 is an ATP binding site; sequence GDRQTGKT.

It belongs to the ATPase alpha/beta chains family. F-type ATPases have 2 components, CF(1) - the catalytic core - and CF(0) - the membrane proton channel. CF(1) has five subunits: alpha(3), beta(3), gamma(1), delta(1), epsilon(1). CF(0) has four main subunits: a, b, b' and c.

The protein resides in the plastid. It localises to the chloroplast thylakoid membrane. The enzyme catalyses ATP + H2O + 4 H(+)(in) = ADP + phosphate + 5 H(+)(out). In terms of biological role, produces ATP from ADP in the presence of a proton gradient across the membrane. The alpha chain is a regulatory subunit. The protein is ATP synthase subunit alpha, chloroplastic of Populus alba (White poplar).